Consider the following 1041-residue polypeptide: Protein SMAX1-like (1041 aa).

Residues 8–188 (IQQTLTPEAA…KSIIEQSLSA (181 aa)) enclose the Clp R domain. Repeat stretches follow at residues 12-98 (LTPE…LDRL) and 117-188 (VSNA…SLSA). Residues 189-205 (PSPCPSAAASTTTAGPG) show a composition bias toward low complexity. 3 disordered regions span residues 189–214 (PSPC…PSPL), 482–513 (EAEQ…QNKA), and 889–913 (EGSH…VKRS). Positions 482-495 (EAEQTDKPASRPEA) are enriched in basic and acidic residues. Residues 891–900 (SHNSSDVSVE) show a composition bias toward polar residues.

The protein belongs to the ClpA/ClpB family.

May act downstream of MAX2 to negatively regulate karrikins/strigolactone responses. Acts probably specifically in the karrikin pathway. May function in a transcriptional corepressor complex. In Oryza sativa subsp. japonica (Rice), this protein is Protein SMAX1-like.